The primary structure comprises 319 residues: HPr kinase/phosphorylase (319 aa).

Catalysis depends on residues His144 and Lys165. 159 to 166 (GKSGIGKS) contacts ATP. Position 166 (Ser166) interacts with Mg(2+). Asp183 serves as the catalytic Proton acceptor; for phosphorylation activity. Proton donor; for dephosphorylation activity. The important for the catalytic mechanism of both phosphorylation and dephosphorylation stretch occupies residues 207-216 (MEIRGLGVIN). Mg(2+) is bound at residue Glu208. Residue Arg249 is part of the active site. The segment at 270 to 275 (PVRPGR) is important for the catalytic mechanism of dephosphorylation.

The protein belongs to the HPrK/P family. In terms of assembly, homohexamer. The cofactor is Mg(2+).

It catalyses the reaction [HPr protein]-L-serine + ATP = [HPr protein]-O-phospho-L-serine + ADP + H(+). The enzyme catalyses [HPr protein]-O-phospho-L-serine + phosphate + H(+) = [HPr protein]-L-serine + diphosphate. Catalyzes the ATP- as well as the pyrophosphate-dependent phosphorylation of a specific serine residue in HPr, a phosphocarrier protein of the phosphoenolpyruvate-dependent sugar phosphotransferase system (PTS). HprK/P also catalyzes the pyrophosphate-producing, inorganic phosphate-dependent dephosphorylation (phosphorolysis) of seryl-phosphorylated HPr (P-Ser-HPr). This is HPr kinase/phosphorylase from Geobacter sulfurreducens (strain ATCC 51573 / DSM 12127 / PCA).